Consider the following 295-residue polypeptide: Alpha-soluble NSF attachment protein (295 aa).

An N-acetylmethionine modification is found at Met-1. Residues Ser-26, Ser-29, and Ser-195 each carry the phosphoserine modification.

Belongs to the SNAP family. Interacts with PRKCABP, and disrupts the interaction between GRIA2 and PRKCABP, leading to the internalization of GRIA2. Found in a complex with VAMP8. Component of a SNARE-like complex that contains at least ZW10, USE1L, RINT1, STX18 and NAPA/SNAP-alpha. Interacts with VTI1A. Interacts with STX12. Interacts with GNA12 (via N-terminus); the interaction promotes CDH5 localization to plasma membrane.

Its subcellular location is the cell membrane. Functionally, required for vesicular transport between the endoplasmic reticulum and the Golgi apparatus. Together with GNA12 promotes CDH5 localization to plasma membrane. This chain is Alpha-soluble NSF attachment protein (NAPA), found in Homo sapiens (Human).